A 220-amino-acid polypeptide reads, in one-letter code: Deoxyribose-phosphate aldolase (220 aa).

Residue Asp-89 is the Proton donor/acceptor of the active site. Lys-151 acts as the Schiff-base intermediate with acetaldehyde in catalysis. Lys-180 (proton donor/acceptor) is an active-site residue.

This sequence belongs to the DeoC/FbaB aldolase family. DeoC type 1 subfamily.

It is found in the cytoplasm. It catalyses the reaction 2-deoxy-D-ribose 5-phosphate = D-glyceraldehyde 3-phosphate + acetaldehyde. It functions in the pathway carbohydrate degradation; 2-deoxy-D-ribose 1-phosphate degradation; D-glyceraldehyde 3-phosphate and acetaldehyde from 2-deoxy-alpha-D-ribose 1-phosphate: step 2/2. Functionally, catalyzes a reversible aldol reaction between acetaldehyde and D-glyceraldehyde 3-phosphate to generate 2-deoxy-D-ribose 5-phosphate. This Streptococcus pneumoniae serotype 2 (strain D39 / NCTC 7466) protein is Deoxyribose-phosphate aldolase.